The sequence spans 208 residues: Small ribosomal subunit protein uS4 (208 aa).

Residues 95–161 form the S4 RNA-binding domain; it reads MRLDALVLRA…VPLQVAAAGA (67 aa).

Belongs to the universal ribosomal protein uS4 family. In terms of assembly, part of the 30S ribosomal subunit. Contacts protein S5. The interaction surface between S4 and S5 is involved in control of translational fidelity.

In terms of biological role, one of the primary rRNA binding proteins, it binds directly to 16S rRNA where it nucleates assembly of the body of the 30S subunit. Its function is as follows. With S5 and S12 plays an important role in translational accuracy. The protein is Small ribosomal subunit protein uS4 of Pseudarthrobacter chlorophenolicus (strain ATCC 700700 / DSM 12829 / CIP 107037 / JCM 12360 / KCTC 9906 / NCIMB 13794 / A6) (Arthrobacter chlorophenolicus).